A 382-amino-acid chain; its full sequence is Nuclear hormone receptor family member nhr-106 (382 aa).

The nuclear receptor DNA-binding region spans 2-78 (QTTCEICEVP…MGMMPEKVKV (77 aa)). 2 NR C4-type zinc fingers span residues 5 to 25 (CEICEVPAHGIHFGAITCRGC) and 42 to 61 (CKYSSNCTNFTGKFPQCKSC). Residues 110–380 (DVSNLITRGL…FSNPEMFIDS (271 aa)) form the NR LBD domain.

This sequence belongs to the nuclear hormone receptor family.

It localises to the nucleus. Functionally, orphan nuclear receptor. In Caenorhabditis elegans, this protein is Nuclear hormone receptor family member nhr-106 (nhr-106).